The primary structure comprises 172 residues: Shikimate kinase (172 aa).

11–16 (GAGKST) contributes to the ATP binding site. Ser15 is a Mg(2+) binding site. Positions 33, 57, and 79 each coordinate substrate. Arg117 contacts ATP. A substrate-binding site is contributed by Arg136. Arg153 is an ATP binding site.

The protein belongs to the shikimate kinase family. In terms of assembly, monomer. Requires Mg(2+) as cofactor.

It is found in the cytoplasm. The catalysed reaction is shikimate + ATP = 3-phosphoshikimate + ADP + H(+). Its pathway is metabolic intermediate biosynthesis; chorismate biosynthesis; chorismate from D-erythrose 4-phosphate and phosphoenolpyruvate: step 5/7. In terms of biological role, catalyzes the specific phosphorylation of the 3-hydroxyl group of shikimic acid using ATP as a cosubstrate. This chain is Shikimate kinase, found in Pseudomonas savastanoi pv. phaseolicola (strain 1448A / Race 6) (Pseudomonas syringae pv. phaseolicola (strain 1448A / Race 6)).